The primary structure comprises 647 residues: Threonine--tRNA ligase (647 aa).

In terms of domain architecture, TGS spans 1–63 (MYMIQLTFPD…EHDGKIELVM (63 aa)). A catalytic region spans residues 247–544 (DHRKLGKELD…LIEEYKGAFP (298 aa)). Residues C340, H391, and H521 each contribute to the Zn(2+) site.

This sequence belongs to the class-II aminoacyl-tRNA synthetase family. In terms of assembly, homodimer. The cofactor is Zn(2+).

The protein localises to the cytoplasm. It catalyses the reaction tRNA(Thr) + L-threonine + ATP = L-threonyl-tRNA(Thr) + AMP + diphosphate + H(+). Its function is as follows. Catalyzes the attachment of threonine to tRNA(Thr) in a two-step reaction: L-threonine is first activated by ATP to form Thr-AMP and then transferred to the acceptor end of tRNA(Thr). Also edits incorrectly charged L-seryl-tRNA(Thr). The protein is Threonine--tRNA ligase of Exiguobacterium sp. (strain ATCC BAA-1283 / AT1b).